The primary structure comprises 349 residues: N-acetyltaurine hydrolase (349 aa).

A divalent metal cation is bound by residues histidine 26, histidine 28, glutamate 169, histidine 201, histidine 230, and aspartate 298.

This sequence belongs to the metallo-dependent hydrolases superfamily. Phosphotriesterase family. A divalent metal cation serves as cofactor. In terms of tissue distribution, expressed in the kidney, liver and brainstem.

It is found in the cytoplasm. It localises to the cytosol. The catalysed reaction is N-acetyltaurine + H2O = taurine + acetate. It catalyses the reaction N-propanoyltaurine + H2O = propanoate + taurine. The enzyme catalyses N-acetyl-L-methionine + H2O = L-methionine + acetate. It carries out the reaction N-acetyl-L-isoleucine + H2O = L-isoleucine + acetate. The catalysed reaction is N-acetyl-L-leucine + H2O = L-leucine + acetate. It catalyses the reaction N-acetyl-L-valine + H2O = L-valine + acetate. Its function is as follows. N-acetyltaurine hydrolase that regulates feeding by catalyzing the hydrolysis of N-acetyltaurine into taurine and acetate. N-acetyltaurine has anorexigenic and anti-obesity effects that are dependent on GFRAL receptor and GDF15. PTER also acts on other N-acetyl amino acids (Met, Ile, Leu, Val) and N-propionyltaurine, but at lower rates. The polypeptide is N-acetyltaurine hydrolase (Mus musculus (Mouse)).